The primary structure comprises 293 residues: Diaminopimelate epimerase (293 aa).

Substrate-binding residues include N11 and N78. The active-site Proton donor is C87. Residues G88 to N89, N166, N202, and E220 to R221 contribute to the substrate site. C229 functions as the Proton acceptor in the catalytic mechanism. Position 230–231 (G230–T231) interacts with substrate.

Belongs to the diaminopimelate epimerase family. As to quaternary structure, homodimer.

The protein localises to the cytoplasm. It carries out the reaction (2S,6S)-2,6-diaminopimelate = meso-2,6-diaminopimelate. It functions in the pathway amino-acid biosynthesis; L-lysine biosynthesis via DAP pathway; DL-2,6-diaminopimelate from LL-2,6-diaminopimelate: step 1/1. Its function is as follows. Catalyzes the stereoinversion of LL-2,6-diaminopimelate (L,L-DAP) to meso-diaminopimelate (meso-DAP), a precursor of L-lysine and an essential component of the bacterial peptidoglycan. The sequence is that of Diaminopimelate epimerase from Mycobacterium sp. (strain JLS).